Here is a 614-residue protein sequence, read N- to C-terminus: Phragmoplastin DRP1C (614 aa).

The 270-residue stretch at 32-301 (WEALPTVAVV…LETVIRQKIP (270 aa)) folds into the Dynamin-type G domain. Positions 42-49 (GGQSSGKS) are G1 motif. Residue 45-50 (SSGKSS) participates in GTP binding. The interval 68-70 (VTR) is G2 motif. A G3 motif region spans residues 143-146 (DLPG). The interval 212–215 (TKLD) is G4 motif. Residues 213–218 (KLDIMD) and 243–246 (NRSQ) contribute to the GTP site. A G5 motif region spans residues 242–245 (VNRS). Residues 499–519 (EPEKEKPNPRNAPAPNADPYS) form a disordered region. The segment covering 507–517 (PRNAPAPNADP) has biased composition (low complexity). One can recognise a GED domain in the interval 523-614 (FRKIGSNVSA…RDDIDAVAWK (92 aa)).

Belongs to the TRAFAC class dynamin-like GTPase superfamily. Dynamin/Fzo/YdjA family. Forms homodimer and may homooligomerize and heterooligomerize to form the phragmoplastin complex. Binds to PHIP1. As to expression, ubiquitous.

The protein resides in the cytoplasm. Its subcellular location is the cytoskeleton. It localises to the cell cortex. It is found in the cytoplasmic vesicle. The protein localises to the clathrin-coated vesicle. The protein resides in the phragmoplast. The catalysed reaction is GTP + H2O = GDP + phosphate + H(+). Microtubule-associated force-producing protein that is targeted to the growing edges of the cell plate during cytokinesis. Also plays a major role in plasma membrane maintenance during pollen maturation. Has a GTPase activity. The polypeptide is Phragmoplastin DRP1C (Arabidopsis thaliana (Mouse-ear cress)).